A 202-amino-acid polypeptide reads, in one-letter code: Transmembrane protein 223 (202 aa).

Topologically, residues 1 to 43 are mitochondrial matrix; the sequence is MAAPWRRWPTGLLAVLRPLLTCRPLQGTTLQRDVLLFEHDRGR. The chain crosses the membrane as a helical span at residues 44–64; the sequence is FFTILGLFCAGQGVFWASMAV. At 65–97 the chain is on the mitochondrial intermembrane side; it reads AAVSRPPVPVQPLDAEVPNRGPFDLRSALWRYG. Residues 98-118 form a helical membrane-spanning segment; that stretch reads LAVGCGAIGALVLGAGLLFSL. The Mitochondrial matrix segment spans residues 119 to 202; that stretch reads RSVRSVVLRA…DNTVGAYRSL (84 aa).

Belongs to the TMEM223 family. In terms of assembly, associates with the mitochondrial ribosome.

It is found in the mitochondrion inner membrane. Its function is as follows. Mitochondrial ribosome-associated protein involved in the first steps of cytochrome c oxidase complex (complex IV) biogenesis. Stimulates the translation of MT-CO1 mRNA and is a constituent of early MT-CO1 assembly intermediates. The chain is Transmembrane protein 223 from Homo sapiens (Human).